Here is a 158-residue protein sequence, read N- to C-terminus: NAD(P)H-quinone oxidoreductase subunit J, chloroplastic (158 aa).

This sequence belongs to the complex I 30 kDa subunit family. As to quaternary structure, NDH is composed of at least 16 different subunits, 5 of which are encoded in the nucleus.

The protein resides in the plastid. It localises to the chloroplast thylakoid membrane. It carries out the reaction a plastoquinone + NADH + (n+1) H(+)(in) = a plastoquinol + NAD(+) + n H(+)(out). The catalysed reaction is a plastoquinone + NADPH + (n+1) H(+)(in) = a plastoquinol + NADP(+) + n H(+)(out). Functionally, NDH shuttles electrons from NAD(P)H:plastoquinone, via FMN and iron-sulfur (Fe-S) centers, to quinones in the photosynthetic chain and possibly in a chloroplast respiratory chain. The immediate electron acceptor for the enzyme in this species is believed to be plastoquinone. Couples the redox reaction to proton translocation, and thus conserves the redox energy in a proton gradient. In Drimys granadensis, this protein is NAD(P)H-quinone oxidoreductase subunit J, chloroplastic.